We begin with the raw amino-acid sequence, 311 residues long: MLQQTVLLSLFLLLRAHQGQDCADSSEEVLGVSGKPVRLRPSNIQAKHVSIEWKKKTGHQQTPQIVTWDTTDNKNFNMCCSDIYGFESENFALSIKSAKLNDSGHYLLEITNQRGIVCTKNFQMLIFDPVETPHLTVQGTLWANGTCQLSLSCFVPKDDNVSYALYRGSMLISNQRYGTHWENRTDASSLHTYTCNVSNKASWANHTLTSPQSCQSVPSKFNYLPFMVSIGILVKFFHGAIDCFCVWNRKRKQSQSIAKESLTIHEYVKNAQVSRDQRGHFRASGSSSDVRGDERGQRESDRRLFQFINRS.

Positions 1-19 are cleaved as a signal peptide; it reads MLQQTVLLSLFLLLRAHQG. At 20–223 the chain is on the extracellular side; sequence QDCADSSEEV…CQSVPSKFNY (204 aa). The cysteines at positions 22 and 118 are disulfide-linked. Ig-like domains are found at residues 22–128 and 131–215; these read CADS…LIFD and ETPH…QSCQ. Asparagine 101, asparagine 144, asparagine 160, asparagine 183, asparagine 196, and asparagine 205 each carry an N-linked (GlcNAc...) asparagine glycan. Cysteine 153 and cysteine 195 are joined by a disulfide. The helical transmembrane segment at 224 to 247 threads the bilayer; sequence LPFMVSIGILVKFFHGAIDCFCVW. The Cytoplasmic segment spans residues 248 to 311; sequence NRKRKQSQSI…RRLFQFINRS (64 aa). Residues 275–301 form a disordered region; the sequence is RDQRGHFRASGSSSDVRGDERGQRESD. Residues 290-301 show a composition bias toward basic and acidic residues; the sequence is VRGDERGQRESD.

Interacts with CD48. Interacts (via phosphorylated ITSM 1-4) with SH2D1A (via SH2 domain); SH2D1A probably mediates association with FYN. Interacts (via phosphorylated ITSM 3) with PTPN11/SHP-2, INPP5D/SHIP1, PTPN6/SHP-1 and CSK; binding of SH2D1A/SAP prevents association with PTPN11, PTPN6 and CSK; conflictingly a similar association has been described for phosphorylated ITSM 1 also including GRB2 and PLCG1. Interacts weakly (via phosphorylated ITSM 2) with PTPN11/SHP-2 and CSK. Interacts with SH2D1B. Interacts with PIK3R1; PI3K recruits SH2D1A. Interacts with MHC class I proteins; the interaction is proposed to prevent self-killing of NK cells. N-linked glycosylation is essential for the binding to its ligand CD48. Also O-glycosylated, in contrast, O-linked sialylation has a negative impact on ligand binding. Post-translationally, phosphorylated by FYN and CSK on tyrosine residues following activation. Coligation with inhibitory receptors such as KIR2DL1 inhibits phosphorylation upon contact of NK cells with sensitive target cells.

The protein localises to the membrane. It is found in the cell membrane. Its subcellular location is the membrane raft. Heterophilic receptor of the signaling lymphocytic activation molecule (SLAM) family; its ligand is CD48. SLAM receptors triggered by homo- or heterotypic cell-cell interactions are modulating the activation and differentiation of a wide variety of immune cells and thus are involved in the regulation and interconnection of both innate and adaptive immune response. Activities are controlled by presence or absence of small cytoplasmic adapter proteins, SH2D1A/SAP and/or SH2D1B/EAT-2. Acts as activating natural killer (NK) cell receptor. Activating function implicates association with SH2D1A and FYN. Downstreaming signaling involves predominantly VAV1, and, to a lesser degree, INPP5D/SHIP1 and CBL. Signal attenuation in the absence of SH2D1A is proposed to be dependent on INPP5D and to a lesser extent PTPN6/SHP-1 and PTPN11/SHP-2. Stimulates NK cell cytotoxicity, production of IFN-gamma and granule exocytosis. Optimal expansion and activation of NK cells seems to be dependent on the engagement of CD244 with CD48 expressed on neighboring NK cells. Acts as costimulator in NK activation by enhancing signals by other NK receptors such as NCR3 and NCR1. At early stages of NK cell differentiation may function as an inhibitory receptor possibly ensuring the self-tolerance of developing NK cells. Involved in the regulation of CD8(+) T-cell proliferation; expression on activated T-cells and binding to CD48 provides costimulatory-like function for neighboring T-cells. Inhibits inflammatory responses in dendritic cells (DCs). The chain is Natural killer cell receptor 2B4 (Cd244) from Rattus norvegicus (Rat).